Reading from the N-terminus, the 291-residue chain is Elongation factor Ts (291 aa).

The segment at 79 to 82 is involved in Mg(2+) ion dislocation from EF-Tu; it reads TDFV.

Belongs to the EF-Ts family.

It is found in the cytoplasm. Associates with the EF-Tu.GDP complex and induces the exchange of GDP to GTP. It remains bound to the aminoacyl-tRNA.EF-Tu.GTP complex up to the GTP hydrolysis stage on the ribosome. This Anaplasma marginale (strain St. Maries) protein is Elongation factor Ts.